Reading from the N-terminus, the 278-residue chain is Formyltetrahydrofolate deformylase (278 aa).

The ACT domain maps to 6–85 (ILLTDCPDDK…RLIGTQRKRI (80 aa)). Residue Asp223 is part of the active site.

The protein belongs to the PurU family.

It catalyses the reaction (6R)-10-formyltetrahydrofolate + H2O = (6S)-5,6,7,8-tetrahydrofolate + formate + H(+). Its pathway is purine metabolism; IMP biosynthesis via de novo pathway; formate from 10-formyl-5,6,7,8-tetrahydrofolate: step 1/1. Its function is as follows. Catalyzes the hydrolysis of 10-formyltetrahydrofolate (formyl-FH4) to formate and tetrahydrofolate (FH4). In Haemophilus influenzae (strain ATCC 51907 / DSM 11121 / KW20 / Rd), this protein is Formyltetrahydrofolate deformylase.